A 396-amino-acid polypeptide reads, in one-letter code: S-adenosylmethionine synthase 4 (396 aa).

Glu12 contributes to the Mg(2+) binding site. Residue His18 participates in ATP binding. A K(+)-binding site is contributed by Glu46. 2 residues coordinate L-methionine: Glu59 and Gln102. ATP-binding positions include 170–172 (DGK), 238–241 (SGRF), Asp249, 255–256 (RK), Ala272, Lys276, and Lys280. Asp249 is a binding site for L-methionine. Lys280 provides a ligand contact to L-methionine.

Belongs to the AdoMet synthase family. As to quaternary structure, homotetramer. It depends on Mn(2+) as a cofactor. The cofactor is Mg(2+). Requires Co(2+) as cofactor. K(+) is required as a cofactor.

The protein resides in the cytoplasm. It carries out the reaction L-methionine + ATP + H2O = S-adenosyl-L-methionine + phosphate + diphosphate. Its pathway is amino-acid biosynthesis; S-adenosyl-L-methionine biosynthesis; S-adenosyl-L-methionine from L-methionine: step 1/1. Catalyzes the formation of S-adenosylmethionine from methionine and ATP. The reaction comprises two steps that are both catalyzed by the same enzyme: formation of S-adenosylmethionine (AdoMet) and triphosphate, and subsequent hydrolysis of the triphosphate. The polypeptide is S-adenosylmethionine synthase 4 (SAM4) (Hordeum vulgare (Barley)).